A 326-amino-acid chain; its full sequence is 2-dehydropantoate 2-reductase (326 aa).

NADP(+)-binding positions include 7 to 12 (GAGAIG) and Asn103. Asn103 serves as a coordination point for substrate. The active-site Proton donor is Lys205. Substrate is bound by residues Asn209, Asn213, and Ser274. Residue Glu286 coordinates NADP(+).

Belongs to the ketopantoate reductase family.

The protein localises to the cytoplasm. It catalyses the reaction (R)-pantoate + NADP(+) = 2-dehydropantoate + NADPH + H(+). Its pathway is cofactor biosynthesis; (R)-pantothenate biosynthesis; (R)-pantoate from 3-methyl-2-oxobutanoate: step 2/2. Catalyzes the NADPH-dependent reduction of ketopantoate into pantoic acid. The polypeptide is 2-dehydropantoate 2-reductase (Mesorhizobium japonicum (strain LMG 29417 / CECT 9101 / MAFF 303099) (Mesorhizobium loti (strain MAFF 303099))).